Reading from the N-terminus, the 277-residue chain is Pantothenate synthetase (277 aa).

Residue 26 to 33 participates in ATP binding; sequence MGNLHAGH. His-33 functions as the Proton donor in the catalytic mechanism. Gln-57 is a (R)-pantoate binding site. Gln-57 is a binding site for beta-alanine. 143-146 contacts ATP; sequence GEKD. Gln-149 serves as a coordination point for (R)-pantoate. ATP is bound by residues Val-172 and 180-183; that span reads LSSR.

The protein belongs to the pantothenate synthetase family. In terms of assembly, homodimer.

The protein resides in the cytoplasm. It carries out the reaction (R)-pantoate + beta-alanine + ATP = (R)-pantothenate + AMP + diphosphate + H(+). It functions in the pathway cofactor biosynthesis; (R)-pantothenate biosynthesis; (R)-pantothenate from (R)-pantoate and beta-alanine: step 1/1. In terms of biological role, catalyzes the condensation of pantoate with beta-alanine in an ATP-dependent reaction via a pantoyl-adenylate intermediate. The protein is Pantothenate synthetase of Nitrosomonas europaea (strain ATCC 19718 / CIP 103999 / KCTC 2705 / NBRC 14298).